We begin with the raw amino-acid sequence, 693 residues long: Elongation factor G (693 aa).

The tr-type G domain occupies 8-284 (DMTRNVGIMA…AIVNYMPAPT (277 aa)). GTP contacts are provided by residues 17 to 24 (AHIDAGKT), 81 to 85 (DTPGH), and 135 to 138 (NKMD).

This sequence belongs to the TRAFAC class translation factor GTPase superfamily. Classic translation factor GTPase family. EF-G/EF-2 subfamily.

The protein localises to the cytoplasm. In terms of biological role, catalyzes the GTP-dependent ribosomal translocation step during translation elongation. During this step, the ribosome changes from the pre-translocational (PRE) to the post-translocational (POST) state as the newly formed A-site-bound peptidyl-tRNA and P-site-bound deacylated tRNA move to the P and E sites, respectively. Catalyzes the coordinated movement of the two tRNA molecules, the mRNA and conformational changes in the ribosome. The sequence is that of Elongation factor G from Fusobacterium nucleatum subsp. nucleatum (strain ATCC 25586 / DSM 15643 / BCRC 10681 / CIP 101130 / JCM 8532 / KCTC 2640 / LMG 13131 / VPI 4355).